A 1167-amino-acid polypeptide reads, in one-letter code: Tight junction protein 2 (1167 aa).

A PDZ 1 domain is found at 10 to 97 (TVTLQKDSKR…IAAIVVKRPR (88 aa)). Residues Ser-107, Ser-127, Ser-130, Ser-140, Ser-145, Ser-147, Ser-173, Ser-194, Ser-205, and Ser-239 each carry the phosphoserine modification. The segment at 129–195 (RSGYSERSRH…SRERSRGRSL (67 aa)) is disordered. A disordered region spans residues 225 to 286 (SYHEAYEPDY…KGQHDPDRPI (62 aa)). Residues 242 to 262 (YDRRAHPETRYERSRSREHLR) are compositionally biased toward basic and acidic residues. The region spanning 287 to 365 (GVLLTKSKAN…KLQLVVLRDS (79 aa)) is the PDZ 2 domain. Phosphoserine occurs at positions 305, 378, 380, 386, 395, 404, 410, and 411. Residues 381-485 (EVEDISEIES…LRPSPEDEAI (105 aa)) are disordered. Over residues 395–426 (SPEERRQQYSDQDYHSSTEKLKERPSSREETS) the composition is skewed to basic and acidic residues. Thr-435 is subject to Phosphothreonine. Ser-479 is modified (phosphoserine). A PDZ 3 domain is found at 489–570 (NTKMVRFKKG…GETVTILAQS (82 aa)). Residue Tyr-554 is modified to Phosphotyrosine. Positions 584-649 (GDSFFIRSHF…PNKSRAEQMA (66 aa)) constitute an SH3 domain. Positions 660–858 (GDRADFWRMR…WFGSLKDSIQ (199 aa)) constitute a Guanylate kinase-like domain. Residues Ser-684 and Ser-884 each carry the phosphoserine modification. Thr-887 carries the phosphothreonine modification. Ser-895 and Ser-902 each carry phosphoserine. 2 disordered regions span residues 904–1055 (FEDT…PRSV) and 1095–1167 (YAVP…DTEL). 2 positions are modified to phosphothreonine: Thr-907 and Thr-915. Positions 938–949 (VQHEENIRKSSP) are enriched in basic and acidic residues. 5 positions are modified to phosphoserine: Ser-948, Ser-960, Ser-968, Ser-988, and Ser-1044. Residues 976–990 (EPPKARSQNREDSFD) show a composition bias toward basic and acidic residues. Over residues 1037–1049 (ESEEVGESTEEQE) the composition is skewed to acidic residues. Tyr-1095 is subject to Phosphotyrosine. Phosphoserine occurs at positions 1124 and 1136. The tract at residues 1165-1167 (TEL) is interaction with SCRIB.

This sequence belongs to the MAGUK family. In terms of assembly, homodimer. Interacts (via PDZ2 domain) with TJP1/ZO1 (via PDZ2 domain). Interacts with UBN1. Interacts with SCRIB. Interacts with OCLN. Interacts with SAFB in the nucleus. Interacts with USP53 (via the C-terminal region). Interacts with claudins, including CLDN1, CLDN2, CLDN3, CLDN5 and CLDN7. Interacts with CLDN18. Interacts (via N-terminus) with CTNNA1.

The protein localises to the cell junction. It localises to the adherens junction. The protein resides in the cell membrane. It is found in the nucleus. Its subcellular location is the tight junction. Functionally, plays a role in tight junctions and adherens junctions. Acts as a positive regulator of RANKL-induced osteoclast differentiation, potentially via mediating downstream transcriptional activity. In Mus musculus (Mouse), this protein is Tight junction protein 2.